The primary structure comprises 126 residues: Large ribosomal subunit protein bL17 (126 aa).

It belongs to the bacterial ribosomal protein bL17 family. Part of the 50S ribosomal subunit. Contacts protein L32.

The chain is Large ribosomal subunit protein bL17 from Vibrio atlanticus (strain LGP32) (Vibrio splendidus (strain Mel32)).